Here is a 713-residue protein sequence, read N- to C-terminus: Polyribonucleotide nucleotidyltransferase (713 aa).

The Mg(2+) site is built by Asp-488 and Asp-494. Positions 555 to 614 constitute a KH domain; sequence PRIEVMNIPTDKIRDVIGSGGKVIREIVEKTGAKINIEDDGTVKIASSNGKEIEAAKKWI. Residues 624–692 form the S1 motif domain; sequence GEIYEGTVVK…ERGKVRLSMK (69 aa).

It belongs to the polyribonucleotide nucleotidyltransferase family. Requires Mg(2+) as cofactor.

It is found in the cytoplasm. The enzyme catalyses RNA(n+1) + phosphate = RNA(n) + a ribonucleoside 5'-diphosphate. Involved in mRNA degradation. Catalyzes the phosphorolysis of single-stranded polyribonucleotides processively in the 3'- to 5'-direction. This chain is Polyribonucleotide nucleotidyltransferase, found in Brucella anthropi (strain ATCC 49188 / DSM 6882 / CCUG 24695 / JCM 21032 / LMG 3331 / NBRC 15819 / NCTC 12168 / Alc 37) (Ochrobactrum anthropi).